The chain runs to 188 residues: Elongation factor P (188 aa).

Belongs to the elongation factor P family.

The protein localises to the cytoplasm. Its pathway is protein biosynthesis; polypeptide chain elongation. In terms of biological role, involved in peptide bond synthesis. Stimulates efficient translation and peptide-bond synthesis on native or reconstituted 70S ribosomes in vitro. Probably functions indirectly by altering the affinity of the ribosome for aminoacyl-tRNA, thus increasing their reactivity as acceptors for peptidyl transferase. In Bacteroides thetaiotaomicron (strain ATCC 29148 / DSM 2079 / JCM 5827 / CCUG 10774 / NCTC 10582 / VPI-5482 / E50), this protein is Elongation factor P.